The sequence spans 453 residues: UDP-glycosyltransferase 74E1 (453 aa).

Residues serine 279, 332–334 (SPQ), 349–357 (HCGWNSTLE), and 371–374 (WADQ) each bind UDP-alpha-D-glucose.

This sequence belongs to the UDP-glycosyltransferase family.

The protein is UDP-glycosyltransferase 74E1 (UGT74E1) of Arabidopsis thaliana (Mouse-ear cress).